The chain runs to 114 residues: Amphinase-4 (114 aa).

Residue His15 is the Proton acceptor of the active site. Cystine bridges form between Cys26–Cys79, Cys41–Cys85, Cys59–Cys100, and Cys97–Cys114. N-linked (GlcNAc...) asparagine glycosylation occurs at Asn27. 42–46 is a binding site for substrate; the sequence is KPVNT. Residues Asn67 and Asn91 are each glycosylated (N-linked (GlcNAc...) asparagine). Catalysis depends on His107, which acts as the Proton donor.

Belongs to the pancreatic ribonuclease family. In terms of assembly, monomer. There are at least five different forms arising from glycan heterogeneity.

Its subcellular location is the secreted. Functionally, endonuclease, hydrolyzes highly polymerized RNA, poly(U) and poly(C), and the dinucleotides CpA and UpA. Hydrolyzes rCA, rUA and rUG. Has cytotoxic activity against cultured human submaxillary gland carcinoma cells. This Lithobates pipiens (Northern leopard frog) protein is Amphinase-4.